We begin with the raw amino-acid sequence, 469 residues long: Transcriptional coactivator YAP1 (469 aa).

The span at 1-21 (MEPAQQPPPQPAPQGPAPPSV) shows a compositional bias: pro residues. The tract at residues 1 to 47 (MEPAQQPPPQPAPQGPAPPSVSPAGTPAAPPAPPAGHQVVHVRGDSE) is disordered. The residue at position 46 (Ser46) is a Phosphoserine. The residue at position 48 (Thr48) is a Phosphothreonine. Residues 71–85 (MRLRKLPDSFFKPPE) adopt a coiled-coil conformation. Lys75 is modified (N6-lactoyllysine). Positions 76-99 (LPDSFFKPPEPKSHSRQASTDAGT) are disordered. Phosphoserine occurs at positions 90 and 94. A phosphothreonine mark is found at Thr95 and Thr104. Phosphoserine; by LATS1 and LATS2 is present on Ser112. 2 positions are modified to phosphoserine: Ser113 and Ser116. Thr136 bears the Phosphothreonine; by MAPK8 and MAPK9 mark. Ser146 bears the Phosphoserine; by LATS1 and LATS2 mark. WW domains are found at residues 153–186 (VPLP…DPRK) and 212–245 (GPLP…DPRL). The segment at 258–290 (SAPVKQPPPLAPQSPQGGVLGGGSSNQQQQIQL) is disordered. 2 positions are modified to phosphoserine: Ser271 and Ser320. The interval 273-469 (QGGVLGGGSS…LDKESFLTWL (197 aa)) is transactivation domain. Residues 280–325 (GSSNQQQQIQLQQLQMEKERLRLKQQELFRQELALRSQLPSLEQDG) are a coiled coil. Ser333 is modified (phosphoserine; by MAPK8 and MAPK9). Polar residues predominate over residues 345-357 (TNSSDPFLNSGTY). A disordered region spans residues 345 to 405 (TNSSDPFLNS…SQSTLPSQQS (61 aa)). Residues Ser347, Ser348, and Ser354 each carry the phosphoserine modification. A Phosphoserine; by LATS1 and LATS2 modification is found at Ser363. Polar residues predominate over residues 365 to 375 (DSGLSMSSYSI). 2 positions are modified to phosphoserine; by CK1: Ser366 and Ser369. Phosphotyrosine; by ABL1 is present on Tyr373. Thr378 bears the Phosphothreonine; by MAPK8 and MAPK9 mark. Positions 393–405 (DTISQSTLPSQQS) are enriched in polar residues.

The protein belongs to the YAP1 family. As to quaternary structure, part of a complex when phosphorylated that contains DSG3, PKP1, YAP1 and YWHAG; the complex is required for localization of DSG3 and YAP1 to the cell membrane in keratinocytes. Binds to the SH3 domain of the YES kinase. Binds to WBP1 and WBP2. Binds, in vitro, through the WW1 domain, to neural isoforms of ENAH that contain the PPSY motif. The phosphorylated form interacts with YWHAB. Interacts (via WW domains) with LATS1 (via PPxY motif 2). Interacts with LATS2. Interacts (via WW domain 1) with ERBB4 (via PPxY motif 2). Interacts with TEAD1, TEAD2, TEAD3 and TEAD4. Interacts with TP73. Interacts with RUNX1. Interacts with HCK. Interacts (via WW domains) with PTPN14 (via PPxY motif 2); this interaction leads to the cytoplasmic sequestration of YAP1 and inhibits its transcriptional coactivator activity. Interacts (when phosphorylated at Ser-112) with SMAD2, SMAD3 and WWTR1. Interacts with PRRG2 (via cytoplasmic domain). Interacts (via WW domains) with PRRG4 (via cytoplasmic domain). Interacts (phosphorylated) with CLDN18; the interaction sequesters YAP1 away from the nucleus and thereby restricts transcription of YAP1 target genes. Interacts with SMAD1. Interacts with AMOT; the interaction facilitates translocation of YAP1 to the cytoplasm and tight junctions. Interacts with AMOTL2, the interaction is required for ubiquitination of AMOTL2 and localization of YAP1 to tight junctions. In terms of processing, phosphorylated by LATS1 and LATS2; leading to cytoplasmic translocation and inactivation. Phosphorylated by ABL1; leading to YAP1 stabilization, enhanced interaction with TP73 and recruitment onto proapoptotic genes; in response to DNA damage. Phosphorylation at Ser-366 and Ser-369 by CK1 is triggered by previous phosphorylation at Ser-363 by LATS proteins and leads to YAP1 ubiquitination by SCF(beta-TRCP) E3 ubiquitin ligase and subsequent degradation. Phosphorylated at Thr-104, Thr-136, Ser-333 and Thr-378 by MAPK8/JNK1 and MAPK9/JNK2, which is required for the regulation of apoptosis by YAP1. Lactylation by AARS1 promotes nuclear localization and stabilization of YAP1, leading to increased Hippo signaling pathway. Delactylated by SIRT1. Post-translationally, ubiquitinated by SCF(beta-TRCP) E3 ubiquitin ligase. In terms of tissue distribution, highly specific to cortical neurons.

It localises to the cytoplasm. The protein localises to the nucleus. The protein resides in the cell junction. It is found in the tight junction. Its subcellular location is the cell membrane. Functionally, transcriptional regulator with dual roles as a coactivator and corepressor. Critical downstream regulatory target in the Hippo signaling pathway, crucial for organ size control and tumor suppression by restricting proliferation and promoting apoptosis. The Hippo signaling pathway core involves a kinase cascade featuring STK3/MST2 and STK4/MST1, along with its regulatory partner SAV1, which phosphorylates and activates LATS1/2 in complex with their regulatory protein, MOB1. This activation leads to the phosphorylation and inactivation of the YAP1 oncoprotein and WWTR1/TAZ. Phosphorylation of YAP1 by LATS1/2 prevents its nuclear translocation, thereby regulating the expression of its target genes. The transcriptional regulation of gene expression requires TEAD transcription factors and modulates cell growth, anchorage-independent growth, and induction of epithelial-mesenchymal transition (EMT). Plays a key role in tissue tension and 3D tissue shape by regulating the cortical actomyosin network, acting via ARHGAP18, a Rho GTPase activating protein that suppresses F-actin polymerization. It also suppresses ciliogenesis by acting as a transcriptional corepressor of TEAD4 target genes AURKA and PLK1. In conjunction with WWTR1, regulates TGFB1-dependent SMAD2 and SMAD3 nuclear accumulation. Synergizes with WBP2 to enhance PGR activity. Attenuates p73-mediated cell death signaling in transcriptional repression-induced atypical death (TRIAD) of neurons. This chain is Transcriptional coactivator YAP1 (Yap1), found in Rattus norvegicus (Rat).